Reading from the N-terminus, the 369-residue chain is tRNA 2-selenouridine synthase (369 aa).

The Rhodanese domain maps to 15–138; the sequence is MLSGHPMMDV…MRQYLIEVID (124 aa). Residue Cys-98 is the S-selanylcysteine intermediate of the active site.

This sequence belongs to the SelU family. As to quaternary structure, monomer.

The catalysed reaction is 5-methylaminomethyl-2-thiouridine(34) in tRNA + selenophosphate + (2E)-geranyl diphosphate + H2O + H(+) = 5-methylaminomethyl-2-selenouridine(34) in tRNA + (2E)-thiogeraniol + phosphate + diphosphate. The enzyme catalyses 5-methylaminomethyl-2-thiouridine(34) in tRNA + (2E)-geranyl diphosphate = 5-methylaminomethyl-S-(2E)-geranyl-thiouridine(34) in tRNA + diphosphate. It carries out the reaction 5-methylaminomethyl-S-(2E)-geranyl-thiouridine(34) in tRNA + selenophosphate + H(+) = 5-methylaminomethyl-2-(Se-phospho)selenouridine(34) in tRNA + (2E)-thiogeraniol. It catalyses the reaction 5-methylaminomethyl-2-(Se-phospho)selenouridine(34) in tRNA + H2O = 5-methylaminomethyl-2-selenouridine(34) in tRNA + phosphate. Its function is as follows. Involved in the post-transcriptional modification of the uridine at the wobble position (U34) of tRNA(Lys), tRNA(Glu) and tRNA(Gln). Catalyzes the conversion of 2-thiouridine (S2U-RNA) to 2-selenouridine (Se2U-RNA). Acts in a two-step process involving geranylation of 2-thiouridine (S2U) to S-geranyl-2-thiouridine (geS2U) and subsequent selenation of the latter derivative to 2-selenouridine (Se2U) in the tRNA chain. The sequence is that of tRNA 2-selenouridine synthase from Shewanella sediminis (strain HAW-EB3).